We begin with the raw amino-acid sequence, 245 residues long: uncharacterized protein (245 aa).

Residues 33–176 are a coiled coil; that stretch reads QRAAYQQVQA…SSQRDMLTAT (144 aa).

This is an uncharacterized protein from Mycobacterium tuberculosis (strain CDC 1551 / Oshkosh).